Consider the following 1037-residue polypeptide: Sodium/potassium exporting P-type ATPase cta3 (1037 aa).

The Cytoplasmic portion of the chain corresponds to 1–61 (MVTINISNPV…GVSAWKVLLR (61 aa)). Residues 62–82 (QVLNAMCVVLILAAALSFGTT) traverse the membrane as a helical segment. A topological domain (extracellular) is located at residue Asp83. The helical transmembrane segment at 84–104 (WIEGGVISAIIVLNITVGFIQ) threads the bilayer. The Cytoplasmic segment spans residues 105–281 (EYKAEKTMDS…LNVGTPLQRK (177 aa)). The chain crosses the membrane as a helical span at residues 282 to 302 (LTVLAYILFCIAIILAIIVMA). At 303-313 (AHSFHVTNEVS) the chain is on the extracellular side. A helical transmembrane segment spans residues 314–334 (IYAISLGISIIPESLIAVLSI). Topologically, residues 335 to 760 (TMAMGQKNMS…GRRMFDNIMR (426 aa)) are cytoplasmic. Asp368 functions as the 4-aspartylphosphate intermediate in the catalytic mechanism. 2 residues coordinate Mg(2+): Asp368 and Thr370. Residues Thr370, Glu468, Lys520, Arg559, Thr620, Gly621, Asp622, Arg678, and Lys684 each contribute to the ATP site. Asp703 contacts Mg(2+). Residue Asn706 coordinates ATP. The helical transmembrane segment at 761–781 (FVLHLLVSNVGEVILLVVGLA) threads the bilayer. Residues 782–787 (FRDEVH) are Extracellular-facing. The chain crosses the membrane as a helical span at residues 788–808 (LSVFPMSPVEILWCNMITSSF). Residues 809 to 844 (PSMGLGMELAQPDVMERLPHDNKVGIFQKSLIVDMM) lie on the Cytoplasmic side of the membrane. The chain crosses the membrane as a helical span at residues 845 to 865 (VYGFFLGVVSLMTWVVIMYGF). Over 866 to 889 (GTGNLSYDCNAHYHAGCNDVFKAR) the chain is Extracellular. Asn869 carries an N-linked (GlcNAc...) asparagine glycan. The helical transmembrane segment at 890-910 (SAVFAVVTFCILIMAVEVKNF) threads the bilayer. Residues 911 to 939 (DNSLFNLHGIPWGEWNFRYFLHTLVENKF) are Cytoplasmic-facing. A helical transmembrane segment spans residues 940–960 (LAWAIALAAVSVFPTIYIPVI). Residues 961-969 (NRDVFKHTY) lie on the Extracellular side of the membrane. Residues 970 to 990 (IGWEWGVVAVAVMFYFFYVEI) traverse the membrane as a helical segment. The Cytoplasmic segment spans residues 991–1037 (WKSIRRSLTNPQKKGKFRRTLSNTITTESKLSEKDLEHRLFLQSRRA). Residue Ser1012 is modified to Phosphoserine.

Belongs to the cation transport ATPase (P-type) (TC 3.A.3) family. Type IID subfamily. Requires Mg(2+) as cofactor. The active site is phosphorylated in presence of sodium or potassium and in conditions of higher pH. Not phosphorylated in presence of calcium ions.

It is found in the cell membrane. It catalyses the reaction Na(+)(in) + ATP + H2O = Na(+)(out) + ADP + phosphate + H(+). It carries out the reaction K(+)(in) + ATP + H2O = K(+)(out) + ADP + phosphate + H(+). Catalyzes the hydrolysis of ATP coupled with the export of sodium and potassium from the cell. May export sodium less efficiently. May transport other cations such as lithium. Sodium/potassium efflux ATPases are involved in salt tolerance and maintaining the membrane potential across the plasma membrane in high salinity (Na+) or alkaline (K+) environments. The polypeptide is Sodium/potassium exporting P-type ATPase cta3 (Schizosaccharomyces pombe (strain 972 / ATCC 24843) (Fission yeast)).